Reading from the N-terminus, the 442-residue chain is Mirror-image polydactyly gene 1 protein (442 aa).

Positions 1–39 are disordered; that stretch reads MENWSKDITHSYLEQETTGINKSTQPDEQLTMNSEKSMH. Positions 12–35 are enriched in polar residues; the sequence is YLEQETTGINKSTQPDEQLTMNSE. 2 coiled-coil regions span residues 107–212 and 253–435; these read SDKE…LENI and ECKM…KVGT.

In terms of tissue distribution, expressed very weakly in heart, liver, skeletal muscle, kidney, pancreas and fetal kidney. Not detected in brain, placenta and lung.

The protein is Mirror-image polydactyly gene 1 protein (MIPOL1) of Homo sapiens (Human).